Here is a 196-residue protein sequence, read N- to C-terminus: CASP-like protein 2A2 (196 aa).

Topologically, residues 1–26 (MAQGKESVSVVEMEGSGNGPAVEMRH) are cytoplasmic. The helical transmembrane segment at 27-47 (FETLFRLLPVGLCISALVLML) threads the bilayer. Topologically, residues 48–68 (KSEQSDQYMQLDYSNVDAFRC) are extracellular. Residues 69–89 (LAYANGICAGYSLISAFDSMV) form a helical membrane-spanning segment. Topologically, residues 90-98 (PVSHHISRS) are cytoplasmic. The helical transmembrane segment at 99–119 (WILFLLDQGITYLMLAGGAVA) threads the bilayer. At 120–148 (TQVLYVAYKGDEKATWEQICGSYGRFCNR) the chain is on the extracellular side. The helical transmembrane segment at 149 to 169 (AGASVIISFFALVCFLLLSLL) threads the bilayer. Topologically, residues 170-196 (SAYRLFSKYDPPIHGGAKLEDQTTAQI) are cytoplasmic.

Belongs to the Casparian strip membrane proteins (CASP) family. In terms of assembly, homodimer and heterodimers.

The protein localises to the cell membrane. The sequence is that of CASP-like protein 2A2 from Picea sitchensis (Sitka spruce).